The sequence spans 785 residues: Endonuclease MutS2 (785 aa).

335-342 (GPNTGGKT) contacts ATP. The 76-residue stretch at 710–785 (LDLRGERYED…GNGVTIVEFK (76 aa)) folds into the Smr domain.

It belongs to the DNA mismatch repair MutS family. MutS2 subfamily. As to quaternary structure, homodimer. Binds to stalled ribosomes, contacting rRNA.

In terms of biological role, endonuclease that is involved in the suppression of homologous recombination and thus may have a key role in the control of bacterial genetic diversity. Acts as a ribosome collision sensor, splitting the ribosome into its 2 subunits. Detects stalled/collided 70S ribosomes which it binds and splits by an ATP-hydrolysis driven conformational change. Acts upstream of the ribosome quality control system (RQC), a ribosome-associated complex that mediates the extraction of incompletely synthesized nascent chains from stalled ribosomes and their subsequent degradation. Probably generates substrates for RQC. This chain is Endonuclease MutS2, found in Listeria monocytogenes serotype 4b (strain CLIP80459).